Reading from the N-terminus, the 257-residue chain is Acetylglutamate kinase (257 aa).

Residues 43-44 (GG), R65, and N157 each bind substrate. Residues 180–185 (DVSGIL) and 208–210 (IIT) each bind ATP.

Belongs to the acetylglutamate kinase family. ArgB subfamily. As to quaternary structure, homodimer.

It localises to the cytoplasm. The catalysed reaction is N-acetyl-L-glutamate + ATP = N-acetyl-L-glutamyl 5-phosphate + ADP. It functions in the pathway amino-acid biosynthesis; L-arginine biosynthesis; N(2)-acetyl-L-ornithine from L-glutamate: step 2/4. Functionally, catalyzes the ATP-dependent phosphorylation of N-acetyl-L-glutamate. The chain is Acetylglutamate kinase from Pectobacterium carotovorum subsp. carotovorum (strain PC1).